The sequence spans 240 residues: Ubiquinone biosynthesis O-methyltransferase (240 aa).

S-adenosyl-L-methionine is bound by residues R44, G64, D85, and M129.

This sequence belongs to the methyltransferase superfamily. UbiG/COQ3 family.

The catalysed reaction is a 3-demethylubiquinol + S-adenosyl-L-methionine = a ubiquinol + S-adenosyl-L-homocysteine + H(+). It carries out the reaction a 3-(all-trans-polyprenyl)benzene-1,2-diol + S-adenosyl-L-methionine = a 2-methoxy-6-(all-trans-polyprenyl)phenol + S-adenosyl-L-homocysteine + H(+). Its pathway is cofactor biosynthesis; ubiquinone biosynthesis. In terms of biological role, O-methyltransferase that catalyzes the 2 O-methylation steps in the ubiquinone biosynthetic pathway. This is Ubiquinone biosynthesis O-methyltransferase from Escherichia coli (strain UTI89 / UPEC).